A 457-amino-acid chain; its full sequence is Siroheme synthase (457 aa).

Positions 1 to 204 (MDHLPIFCQL…NDQKAITETT (204 aa)) are precorrin-2 dehydrogenase /sirohydrochlorin ferrochelatase. Residues 22 to 23 (DV) and 43 to 44 (LA) contribute to the NAD(+) site. Ser-128 carries the phosphoserine modification. Positions 216–457 (GEVVLVGAGP…RDKLNWFSNH (242 aa)) are uroporphyrinogen-III C-methyltransferase. S-adenosyl-L-methionine is bound at residue Pro-225. Residue Asp-248 is the Proton acceptor of the active site. The active-site Proton donor is the Lys-270. S-adenosyl-L-methionine is bound by residues 301–303 (GGD), Ile-306, 331–332 (TA), Met-382, and Gly-411.

The protein in the N-terminal section; belongs to the precorrin-2 dehydrogenase / sirohydrochlorin ferrochelatase family. In the C-terminal section; belongs to the precorrin methyltransferase family.

It carries out the reaction uroporphyrinogen III + 2 S-adenosyl-L-methionine = precorrin-2 + 2 S-adenosyl-L-homocysteine + H(+). It catalyses the reaction precorrin-2 + NAD(+) = sirohydrochlorin + NADH + 2 H(+). The catalysed reaction is siroheme + 2 H(+) = sirohydrochlorin + Fe(2+). It participates in cofactor biosynthesis; adenosylcobalamin biosynthesis; precorrin-2 from uroporphyrinogen III: step 1/1. It functions in the pathway cofactor biosynthesis; adenosylcobalamin biosynthesis; sirohydrochlorin from precorrin-2: step 1/1. The protein operates within porphyrin-containing compound metabolism; siroheme biosynthesis; precorrin-2 from uroporphyrinogen III: step 1/1. Its pathway is porphyrin-containing compound metabolism; siroheme biosynthesis; siroheme from sirohydrochlorin: step 1/1. It participates in porphyrin-containing compound metabolism; siroheme biosynthesis; sirohydrochlorin from precorrin-2: step 1/1. Its function is as follows. Multifunctional enzyme that catalyzes the SAM-dependent methylations of uroporphyrinogen III at position C-2 and C-7 to form precorrin-2 via precorrin-1. Then it catalyzes the NAD-dependent ring dehydrogenation of precorrin-2 to yield sirohydrochlorin. Finally, it catalyzes the ferrochelation of sirohydrochlorin to yield siroheme. This chain is Siroheme synthase, found in Escherichia fergusonii (strain ATCC 35469 / DSM 13698 / CCUG 18766 / IAM 14443 / JCM 21226 / LMG 7866 / NBRC 102419 / NCTC 12128 / CDC 0568-73).